The sequence spans 1012 residues: MTNLQDQTQQIVPFIRSLLMPTTGPASIPDDTLEKHTLRSETSTYNLTVGDTGSGLIVFFPGFPGSIVGAHYTLQSNGNYKFDQMLLTAQNLPASYNYCRLVSRSLTVRSSTLPGGVYALNGTINAVTFQGSLSELTDVSYNGLMSATANINDKIGNVLVGEGVTVLSLPTSYDLGYVRLGDPIPAIGLDPKMVATCDSSDRPRVYTITAADDYQFSSQYQPGGVTITLFSANIDAITSLSIGGELVFQTSVQGLVLGATIYLIGFDGTAVITRAVAADNGLTAGTDNLMPFNLVIPTNEITQPITSIKLEIVTSKSGGQAGDQMSWSASGSLAVTIHGGNYPGALRPVTLVAYERVATGSVVTVAGVSNFELIPNPELAKNLVTEYGRFDPGAMNYTKLILSERDRLGIKTVWPTREYTDFREYFMEVADLNSPLKIAGAFGFKDIIRAIRRIAVPVVSTLFPPAAPLAHAIGEGVDYLLGDEAQAASGTARAASGKARAASGRIRQLTLAADKGYEVVANLFQVPQNPVVDGILASPGVLRGAHNLDCVLREGATLFPVVITTVEDAMTPKALNSKMFAVIEGVREDLQPPSQRGSFIRTLSGHRVYGYAPDGVLPLETGRDYTVVPIDDVWDDSIMLSKDPIPPIVGNSGNLAIAYMDVFRPKVPIHVAMTGAPNACGEIEKISFRSTKLATAHRLGLKLAGPGAFDVNTGPNWATFIKRFPHNPRDWDRLPYLNLPYLPPNAGRQYHLAMAASEFKDTPELESAVRAMEAAANVDSLFQSALSVFMWLEENGIVTDMANFTLSDPNAHRMRNFLANAPQAGSKSQRAKYGTAGYGVEARGPTPEEAQRKKDTRISKKMETMGIYFATPEWVALNGHRGPSPGQLKYWQNTREIPDPNEDYLDYVHAEKSRLASDEQILRAATSIYGAPGQAEPPQAFIDEVAKVYEINHGRGPNQEQMKDLLLTAMEMKHRNPRRAPPKPKPKPNAPTQRPPGRLGRWIRTVSDEDLE.

Aspartate 30 serves as a coordination point for a divalent metal cation. The Peptidase S50 domain occupies 513 to 755; the sequence is ADKGYEVVAN…AGRQYHLAMA (243 aa). The Nucleophile role is filled by serine 652. The active site involves lysine 692. Disordered stretches follow at residues 837 to 857 and 968 to 1012; these read GYGVEARGPTPEEAQRKKDTR and TAME…EDLE. The segment covering 975–986 has biased composition (basic residues); the sequence is RNPRRAPPKPKP. An interaction with VP1 protein region spans residues 1003-1012; sequence IRTVSDEDLE.

In terms of assembly, homotrimer. A central divalent metal stabilizes the VP2 trimer. Interacts with host ITGA4/ITGB1. Homodimer. Interacts (via C-terminus) with VP1 in the cytoplasm. Interacts with VP2. In terms of processing, specific enzymatic cleavages yield mature proteins. The capsid assembly seems to be regulated by polyprotein processing. The protease VP4 cleaves itself off the polyprotein, thus releasing pre-VP2 and VP3 within the infected cell. During capsid assembly, the C-terminus of pre-VP2 is further processed by VP4, giving rise to VP2, the external capsid protein and three small peptides that all stay closely associated with the capsid.

The protein resides in the virion. It localises to the host cytoplasm. Capsid protein VP2 self assembles to form an icosahedral capsid with a T=13 symmetry, about 70 nm in diameter, and consisting of 260 VP2 trimers. The capsid encapsulates the genomic dsRNA. VP2 is also involved in attachment and entry into the host cell by interacting with host ITGA4/ITGB1. Functionally, the precursor of VP2 plays an important role in capsid assembly. First, pre-VP2 and VP2 oligomers assemble to form a procapsid. Then, the pre-VP2 intermediates may be processed into VP2 proteins by proteolytic cleavage mediated by VP4 to obtain the mature virion. The final capsid is composed of pentamers and hexamers but VP2 has a natural tendency to assemble into all-pentameric structures. Therefore pre-VP2 may be required to allow formation of the hexameric structures. In terms of biological role, protease VP4 is a serine protease that cleaves the polyprotein into its final products. Pre-VP2 is first partially cleaved, and may be completely processed by VP4 upon capsid maturation. Its function is as follows. Capsid protein VP3 plays a key role in virion assembly by providing a scaffold for the capsid made of VP2. May self-assemble to form a T=4-like icosahedral inner-capsid composed of at least 180 trimers. Plays a role in genomic RNA packaging by recruiting VP1 into the capsid and interacting with the dsRNA genome segments to form a ribonucleoprotein complex. Additionally, the interaction of the VP3 C-terminal tail with VP1 removes the inherent structural blockade of the polymerase active site. Thus, VP3 can also function as a transcriptional activator. Structural peptide 1 is a small peptide derived from pre-VP2 C-terminus. It destabilizes and perforates cell membranes, suggesting a role during entry. Functionally, structural peptide 2 is a small peptide derived from pVP2 C-terminus. It is not essential for the virus viability, but viral growth is affected when missing. In terms of biological role, structural peptide 3 is a small peptide derived from pVP2 C-terminus. It is not essential for the virus viability, but viral growth is affected when missing. Its function is as follows. Structural peptide 4 is a small peptide derived from pVP2 C-terminus. It is essential for the virus viability. This Gallus gallus (Chicken) protein is Structural polyprotein.